Consider the following 261-residue polypeptide: Malonyl-[acyl-carrier protein] O-methyltransferase (261 aa).

The protein belongs to the methyltransferase superfamily.

The enzyme catalyses malonyl-[ACP] + S-adenosyl-L-methionine = malonyl-[ACP] methyl ester + S-adenosyl-L-homocysteine. It participates in cofactor biosynthesis; biotin biosynthesis. Its function is as follows. Converts the free carboxyl group of a malonyl-thioester to its methyl ester by transfer of a methyl group from S-adenosyl-L-methionine (SAM). It allows to synthesize pimeloyl-ACP via the fatty acid synthetic pathway. The polypeptide is Malonyl-[acyl-carrier protein] O-methyltransferase (Bacteroides thetaiotaomicron (strain ATCC 29148 / DSM 2079 / JCM 5827 / CCUG 10774 / NCTC 10582 / VPI-5482 / E50)).